The following is a 378-amino-acid chain: Cytochrome b (378 aa).

4 helical membrane passes run Phe35 to Met55, Trp79 to Gly101, Thr114 to Val134, and Phe180 to Phe200. His85 and His99 together coordinate heme b. Positions 184 and 198 each coordinate heme b. His203 provides a ligand contact to a ubiquinone. A run of 4 helical transmembrane segments spans residues Tyr226–Phe246, Leu290–His310, Phe326–Cys346, and Val350–Leu370.

Belongs to the cytochrome b family. The main subunits of complex b-c1 are: cytochrome b, cytochrome c1 and the Rieske protein. Requires heme b as cofactor.

It is found in the mitochondrion inner membrane. Component of the ubiquinol-cytochrome c reductase complex (complex III or cytochrome b-c1 complex) that is part of the mitochondrial respiratory chain. The b-c1 complex mediates electron transfer from ubiquinol to cytochrome c. Contributes to the generation of a proton gradient across the mitochondrial membrane that is then used for ATP synthesis. This Paraspadella gotoi (Arrow worm) protein is Cytochrome b (mt:Cyt-b).